The chain runs to 926 residues: BTB/POZ domain-containing protein KCTD19 (926 aa).

The BTB 1 domain occupies 18 to 72; sequence NVGGWHFSVPRSKLSQFPDSLLWKEASALTSSESQRLFIDRDGSTFRHVHYYLYT. Ser-270 carries the phosphoserine modification. Residues 398 to 485 form the BTB 2 domain; it reads IKVYVGSHWY…YHIPSLSEAL (88 aa). The interval 673-751 is disordered; that stretch reads GSEAASQPST…PAPEQPLPEA (79 aa). Residues 730–742 show a composition bias toward basic and acidic residues; the sequence is DWSKQRTKERESP.

As to quaternary structure, identified in a complex with ZNF541, HDAC1 and HSPA2. Identified in a complex with ZNF541 and HDAC1. Identified in a complex with HDAC1, HDAC2, DNTTIP1 and ZNF541.

The protein resides in the nucleus. In terms of biological role, transcription regulator which is essential for male fertility and for the completion of meiotic prophase in spermatocytes. Regulates progression of the pachytene stage of meiotic prophase and promotes the transcriptional activation activity ZNF541. Required for the organization of chromosomes during metaphase I. In Homo sapiens (Human), this protein is BTB/POZ domain-containing protein KCTD19 (KCTD19).